A 131-amino-acid chain; its full sequence is Fumarate reductase subunit C (131 aa).

3 helical membrane-spanning segments follow: residues 30 to 50 (EGTA…LFAL), 63 to 83 (FLQN…ALLH), and 109 to 129 (IIKS…FVAL).

It belongs to the FrdC family. In terms of assembly, part of an enzyme complex containing four subunits: a flavoprotein (FrdA), an iron-sulfur protein (FrdB), and two hydrophobic anchor proteins (FrdC and FrdD).

It is found in the cell inner membrane. Two distinct, membrane-bound, FAD-containing enzymes are responsible for the catalysis of fumarate and succinate interconversion; fumarate reductase is used in anaerobic growth, and succinate dehydrogenase is used in aerobic growth. Anchors the catalytic components of the fumarate reductase complex to the cell inner membrane, binds quinones. The sequence is that of Fumarate reductase subunit C from Shigella boydii serotype 4 (strain Sb227).